Consider the following 361-residue polypeptide: Phosphoserine aminotransferase (361 aa).

Residues Ser9 and Arg42 each coordinate L-glutamate. Pyridoxal 5'-phosphate is bound by residues 76-77 (GR), Trp102, Thr153, Asp173, and Gln196. An N6-(pyridoxal phosphate)lysine modification is found at Lys197. Residue 238 to 239 (NT) participates in pyridoxal 5'-phosphate binding.

The protein belongs to the class-V pyridoxal-phosphate-dependent aminotransferase family. SerC subfamily. Homodimer. Requires pyridoxal 5'-phosphate as cofactor.

Its subcellular location is the cytoplasm. It carries out the reaction O-phospho-L-serine + 2-oxoglutarate = 3-phosphooxypyruvate + L-glutamate. The enzyme catalyses 4-(phosphooxy)-L-threonine + 2-oxoglutarate = (R)-3-hydroxy-2-oxo-4-phosphooxybutanoate + L-glutamate. Its pathway is amino-acid biosynthesis; L-serine biosynthesis; L-serine from 3-phospho-D-glycerate: step 2/3. It participates in cofactor biosynthesis; pyridoxine 5'-phosphate biosynthesis; pyridoxine 5'-phosphate from D-erythrose 4-phosphate: step 3/5. Its function is as follows. Catalyzes the reversible conversion of 3-phosphohydroxypyruvate to phosphoserine and of 3-hydroxy-2-oxo-4-phosphonooxybutanoate to phosphohydroxythreonine. The polypeptide is Phosphoserine aminotransferase (Cronobacter sakazakii (strain ATCC BAA-894) (Enterobacter sakazakii)).